Consider the following 359-residue polypeptide: Fructose-bisphosphate aldolase (359 aa).

Serine 62 contributes to the D-glyceraldehyde 3-phosphate binding site. The active-site Proton donor is aspartate 110. Residues histidine 111, aspartate 145, glutamate 175, and histidine 227 each coordinate Zn(2+). Glycine 228 lines the dihydroxyacetone phosphate pocket. Residue histidine 265 participates in Zn(2+) binding. Residues 266–268 and 287–290 each bind dihydroxyacetone phosphate; these read GGS and NIDT.

The protein belongs to the class II fructose-bisphosphate aldolase family. Homodimer. Zn(2+) serves as cofactor.

The enzyme catalyses beta-D-fructose 1,6-bisphosphate = D-glyceraldehyde 3-phosphate + dihydroxyacetone phosphate. The protein operates within carbohydrate degradation; glycolysis; D-glyceraldehyde 3-phosphate and glycerone phosphate from D-glucose: step 4/4. Functionally, catalyzes the aldol condensation of dihydroxyacetone phosphate (DHAP or glycerone-phosphate) with glyceraldehyde 3-phosphate (G3P) to form fructose 1,6-bisphosphate (FBP) in gluconeogenesis and the reverse reaction in glycolysis. This Haemophilus influenzae (strain ATCC 51907 / DSM 11121 / KW20 / Rd) protein is Fructose-bisphosphate aldolase (fba).